The chain runs to 414 residues: MLEEGEHVLVAVSGGIDSMTLLYVLRKFSPLLKIKITAAHLDHRIRESSRRDREFVERICRQWNIPVETSEVDVPSLWKDSGKTLEEIAREVRYDFLKRTAKKVGASKIALAHHKNDLLETVVHRLIRGTGPLGLACISPKREEFIRPFLVFKRSEIEEYARKNNVPYVVDETNYNVKYTRNFIRHRIVPLMKELNPTVEDAVYRLVSVTHLLRNFVERTVQDFVERNVYFYKDYAVFVEPEDLFLFLEVTRWVLKEMYGRVPEYEKLIGTLKSKRVELWSGIFVERSFGYVAVGKTVFKKKYRVEVKGDMLEMEGFKIRVVNNRNDMKFWVRNRKEGDRIIVNGRERKLKDVFIEKKVPTFYRDRVPLLVDEEDRVLWVPGIARSDFLPEDVVVELLEYPVGYVKGGTYFEQV.

An ATP-binding site is contributed by 13 to 18 (SGGIDS).

Belongs to the tRNA(Ile)-lysidine synthase family.

It localises to the cytoplasm. The enzyme catalyses cytidine(34) in tRNA(Ile2) + L-lysine + ATP = lysidine(34) in tRNA(Ile2) + AMP + diphosphate + H(+). In terms of biological role, ligates lysine onto the cytidine present at position 34 of the AUA codon-specific tRNA(Ile) that contains the anticodon CAU, in an ATP-dependent manner. Cytidine is converted to lysidine, thus changing the amino acid specificity of the tRNA from methionine to isoleucine. The protein is tRNA(Ile)-lysidine synthase of Thermotoga maritima (strain ATCC 43589 / DSM 3109 / JCM 10099 / NBRC 100826 / MSB8).